The sequence spans 153 residues: Vasotocin-neurophysin VT 1 (153 aa).

Residues 1-20 (MPYSTFPLLWVLGLLALSSA) form the signal peptide. An intrachain disulfide couples Cys21 to Cys26. Gly29 bears the Glycine amide mark. 7 cysteine pairs are disulfide-bonded: Cys41-Cys85, Cys44-Cys58, Cys52-Cys75, Cys59-Cys65, Cys92-Cys104, Cys98-Cys116, and Cys105-Cys110.

This sequence belongs to the vasopressin/oxytocin family. In terms of processing, seven disulfide bonds are present in neurophysin.

The protein resides in the secreted. Its function is as follows. Vasotocin is an antidiuretic hormone. The chain is Vasotocin-neurophysin VT 1 from Oncorhynchus keta (Chum salmon).